A 252-amino-acid chain; its full sequence is Ribonuclease HII (252 aa).

The RNase H type-2 domain maps to 41–232 (LLVAGVDEAG…VRLALEGREQ (192 aa)). A divalent metal cation is bound by residues D47, E48, and D140.

The protein belongs to the RNase HII family. The cofactor is Mn(2+). Requires Mg(2+) as cofactor.

It localises to the cytoplasm. The catalysed reaction is Endonucleolytic cleavage to 5'-phosphomonoester.. Functionally, endonuclease that specifically degrades the RNA of RNA-DNA hybrids. This chain is Ribonuclease HII, found in Xanthomonas oryzae pv. oryzae (strain KACC10331 / KXO85).